The chain runs to 320 residues: ADP-L-glycero-D-manno-heptose-6-epimerase (320 aa).

NADP(+) contacts are provided by residues Phe-10–Ile-11, Asp-31–Asn-32, Lys-38, Lys-53, Leu-75–Ser-79, and Asn-92. The active-site Proton acceptor is Tyr-139. Lys-143 lines the NADP(+) pocket. Substrate is bound at residue Asn-168. Residues Val-169 and Lys-177 each coordinate NADP(+). The Proton acceptor role is filled by Lys-177. Substrate is bound by residues Gly-179, His-186, Phe-200–Ser-203, Arg-213, and Tyr-277.

It belongs to the NAD(P)-dependent epimerase/dehydratase family. HldD subfamily. In terms of assembly, homopentamer. The cofactor is NADP(+).

The enzyme catalyses ADP-D-glycero-beta-D-manno-heptose = ADP-L-glycero-beta-D-manno-heptose. The protein operates within nucleotide-sugar biosynthesis; ADP-L-glycero-beta-D-manno-heptose biosynthesis; ADP-L-glycero-beta-D-manno-heptose from D-glycero-beta-D-manno-heptose 7-phosphate: step 4/4. Its function is as follows. Catalyzes the interconversion between ADP-D-glycero-beta-D-manno-heptose and ADP-L-glycero-beta-D-manno-heptose via an epimerization at carbon 6 of the heptose. The chain is ADP-L-glycero-D-manno-heptose-6-epimerase from Alkalilimnicola ehrlichii (strain ATCC BAA-1101 / DSM 17681 / MLHE-1).